Reading from the N-terminus, the 117-residue chain is Putative hydrolase fragment YghX (117 aa).

The segment at 91-117 (DGLSSVGGYPGNDDKGRELQQQVDPTN) is disordered.

The chain is Putative hydrolase fragment YghX (yghX) from Escherichia coli (strain K12).